The chain runs to 313 residues: Ribosomal RNA small subunit methyltransferase H (313 aa).

S-adenosyl-L-methionine is bound by residues 35–37 (GGH), aspartate 55, phenylalanine 79, aspartate 100, and glutamine 107.

It belongs to the methyltransferase superfamily. RsmH family.

The protein localises to the cytoplasm. The catalysed reaction is cytidine(1402) in 16S rRNA + S-adenosyl-L-methionine = N(4)-methylcytidine(1402) in 16S rRNA + S-adenosyl-L-homocysteine + H(+). Functionally, specifically methylates the N4 position of cytidine in position 1402 (C1402) of 16S rRNA. This is Ribosomal RNA small subunit methyltransferase H from Burkholderia orbicola (strain MC0-3).